A 202-amino-acid chain; its full sequence is Protein SYM1 (202 aa).

Helical transmembrane passes span 15-31 (MAVT…DCVS), 48-66 (AGIY…FRFL), 82-99 (AVFA…MGLL), and 143-159 (VLAS…FLAY).

Belongs to the peroxisomal membrane protein PXMP2/4 family.

The protein resides in the mitochondrion inner membrane. Its function is as follows. May be involved in cellular response to stress. Required to maintain mitochondrial DNA (mtDNA) integrity and stability. This Yarrowia lipolytica (strain CLIB 122 / E 150) (Yeast) protein is Protein SYM1 (SYM1).